A 179-amino-acid chain; its full sequence is ATP synthase subunit delta (179 aa).

It belongs to the ATPase delta chain family. As to quaternary structure, F-type ATPases have 2 components, F(1) - the catalytic core - and F(0) - the membrane proton channel. F(1) has five subunits: alpha(3), beta(3), gamma(1), delta(1), epsilon(1). F(0) has three main subunits: a(1), b(2) and c(10-14). The alpha and beta chains form an alternating ring which encloses part of the gamma chain. F(1) is attached to F(0) by a central stalk formed by the gamma and epsilon chains, while a peripheral stalk is formed by the delta and b chains.

It is found in the cell inner membrane. Functionally, f(1)F(0) ATP synthase produces ATP from ADP in the presence of a proton or sodium gradient. F-type ATPases consist of two structural domains, F(1) containing the extramembraneous catalytic core and F(0) containing the membrane proton channel, linked together by a central stalk and a peripheral stalk. During catalysis, ATP synthesis in the catalytic domain of F(1) is coupled via a rotary mechanism of the central stalk subunits to proton translocation. This protein is part of the stalk that links CF(0) to CF(1). It either transmits conformational changes from CF(0) to CF(1) or is implicated in proton conduction. The sequence is that of ATP synthase subunit delta from Burkholderia lata (strain ATCC 17760 / DSM 23089 / LMG 22485 / NCIMB 9086 / R18194 / 383).